Here is a 1071-residue protein sequence, read N- to C-terminus: ATP-dependent helicase/deoxyribonuclease subunit B (1071 aa).

The protein belongs to the helicase family. AddB/RexB type 2 subfamily. Heterodimer of AddA and RexB. Requires Mg(2+) as cofactor.

In terms of biological role, the heterodimer acts as both an ATP-dependent DNA helicase and an ATP-dependent, dual-direction single-stranded exonuclease. Recognizes the chi site generating a DNA molecule suitable for the initiation of homologous recombination. This subunit has 5' -&gt; 3' nuclease activity but not helicase activity. The chain is ATP-dependent helicase/deoxyribonuclease subunit B from Streptococcus pyogenes serotype M6 (strain ATCC BAA-946 / MGAS10394).